The chain runs to 299 residues: Sulfate adenylyltransferase subunit 2 (299 aa).

The protein belongs to the PAPS reductase family. CysD subfamily. As to quaternary structure, sulfate-activating enzymes, NodP and NodQ, may be physically associated.

It catalyses the reaction sulfate + ATP + H(+) = adenosine 5'-phosphosulfate + diphosphate. Functionally, proposed to provide activated sulfate for transfer to nod factor. The sequence is that of Sulfate adenylyltransferase subunit 2 (nodP) from Rhizobium tropici.